Reading from the N-terminus, the 300-residue chain is Protoheme IX farnesyltransferase (300 aa).

9 helical membrane passes run 21-43 (PRVV…RGVP), 45-65 (PLSV…AGAF), 94-114 (ASLI…LLFV), 117-137 (LSAL…SIVL), 145-167 (IVWG…TGSI), 171-193 (AIVL…SIHY), 213-233 (LVVL…LLLI), 235-255 (VAHM…WFVY), and 272-292 (AMHI…SVGI).

This sequence belongs to the UbiA prenyltransferase family. Protoheme IX farnesyltransferase subfamily.

The protein localises to the cell membrane. The catalysed reaction is heme b + (2E,6E)-farnesyl diphosphate + H2O = Fe(II)-heme o + diphosphate. It participates in porphyrin-containing compound metabolism; heme O biosynthesis; heme O from protoheme: step 1/1. Its function is as follows. Converts heme B (protoheme IX) to heme O by substitution of the vinyl group on carbon 2 of heme B porphyrin ring with a hydroxyethyl farnesyl side group. In Tropheryma whipplei (strain TW08/27) (Whipple's bacillus), this protein is Protoheme IX farnesyltransferase.